The primary structure comprises 192 residues: Inner membrane protein YohD (192 aa).

The Periplasmic portion of the chain corresponds to 1–40 (MDLNTLISQYGYAALVIGSLAEGETVTLLGGVAAHQGLLK). Residues 41-61 (FPLVVLSVALGGMIGDQVLYL) traverse the membrane as a helical segment. Residues 62-121 (CGRRFGGKLLRRFSKHQDKIERAQKLIQRHPYLFVIGTRFMYGFRVIGPTLIGASQLPPK) are Cytoplasmic-facing. A helical membrane pass occupies residues 122-142 (IFLPLNILGAFAWALIFTTIG). Over 143-159 (YAGGQVIAPWLHNLDQH) the chain is Periplasmic. The chain crosses the membrane as a helical span at residues 160–180 (LKHWVWLILVVVLVVGVRWWL). Topologically, residues 181-192 (KRRGKKKPDHQA) are cytoplasmic.

Belongs to the DedA family.

It localises to the cell inner membrane. This is Inner membrane protein YohD (yohD) from Escherichia coli (strain K12).